The sequence spans 84 residues: Large ribosomal subunit protein bL31B (84 aa).

Belongs to the bacterial ribosomal protein bL31 family. Type B subfamily. In terms of assembly, part of the 50S ribosomal subunit.

The sequence is that of Large ribosomal subunit protein bL31B from Staphylococcus aureus (strain Mu3 / ATCC 700698).